Here is a 122-residue protein sequence, read N- to C-terminus: Large ribosomal subunit protein uL14 (122 aa).

The protein belongs to the universal ribosomal protein uL14 family. Part of the 50S ribosomal subunit. Forms a cluster with proteins L3 and L19. In the 70S ribosome, L14 and L19 interact and together make contacts with the 16S rRNA in bridges B5 and B8.

Binds to 23S rRNA. Forms part of two intersubunit bridges in the 70S ribosome. The sequence is that of Large ribosomal subunit protein uL14 from Synechococcus sp. (strain JA-3-3Ab) (Cyanobacteria bacterium Yellowstone A-Prime).